Reading from the N-terminus, the 367-residue chain is Apurinic-apyrimidinic endonuclease 1 (367 aa).

Residues His83, His123, Glu158, Asp192, His195, His229, Asp242, His244, and Glu274 each coordinate Zn(2+). Positions 312 to 367 (DTLQKLGAKSRKEQLDKFEVKQKKRAGGTKRKKATAEPSDNDILSQMTKKRKTKKE) are disordered. Basic and acidic residues predominate over residues 321 to 332 (SRKEQLDKFEVK). A compositionally biased stretch (basic residues) spans 333-344 (QKKRAGGTKRKK). Ser356 is modified (phosphoserine).

The protein belongs to the AP endonuclease 2 family. In terms of assembly, monomer. Zn(2+) serves as cofactor.

It localises to the nucleus. In terms of biological role, DNA repair enzyme that cleaves apurinic/apyrimidinic (AP) sites and removes 3'-blocking groups present at single strand breaks of damaged DNA. APN1 accounts for &gt; 97% of both apurinic/apyrimidinic (AP) endonuclease and DNA 3'-repair diesterase activities. In Saccharomyces cerevisiae (strain ATCC 204508 / S288c) (Baker's yeast), this protein is Apurinic-apyrimidinic endonuclease 1 (APN1).